Reading from the N-terminus, the 157-residue chain is Thioredoxin-T (157 aa).

Positions 2–107 (VYPVRNKDDL…LAKLMEKHAG (106 aa)) constitute a Thioredoxin domain. A disulfide bond links C32 and C35. The tract at residues 132-157 (ESSESDNDNNNVNEVSAHDENAVLEH) is disordered. Basic and acidic residues predominate over residues 147–157 (SAHDENAVLEH).

Belongs to the thioredoxin family. As to expression, testis specific. Not expressed in the embryo. Becomes progressively more strongly expressed during larval and pupal development. In testis, it is strongly expressed in young spermatocytes, and postmeiotic spermatid stages, then expression decreases at the nuclear elongation stage. Strongly expressed in the waste bag, in which material no longer needed for the mature sperm is eliminated. Not expressed in the stem cells and spermatogonial cells.

It is found in the nucleus. Its subcellular location is the chromosome. Its function is as follows. Probably participates in various redox reactions through the reversible oxidation of its active center dithiol to a disulfide and catalyzes dithiol-disulfide exchange reactions. Its tissue specificity suggests a regulatory role in the germline. The chain is Thioredoxin-T (TrxT) from Drosophila melanogaster (Fruit fly).